The primary structure comprises 320 residues: Thymidylate synthase (320 aa).

DUMP is bound by residues arginine 27 and 182–183 (RR). Residue cysteine 202 is the Nucleophile of the active site. DUMP-binding positions include 222 to 225 (RSAD), asparagine 233, and 263 to 265 (HIY). A (6R)-5,10-methylene-5,6,7,8-tetrahydrofolate-binding site is contributed by aspartate 225. Alanine 319 serves as a coordination point for (6R)-5,10-methylene-5,6,7,8-tetrahydrofolate.

Belongs to the thymidylate synthase family. Bacterial-type ThyA subfamily. Homodimer.

The protein resides in the cytoplasm. The catalysed reaction is dUMP + (6R)-5,10-methylene-5,6,7,8-tetrahydrofolate = 7,8-dihydrofolate + dTMP. The protein operates within pyrimidine metabolism; dTTP biosynthesis. Its function is as follows. Catalyzes the reductive methylation of 2'-deoxyuridine-5'-monophosphate (dUMP) to 2'-deoxythymidine-5'-monophosphate (dTMP) while utilizing 5,10-methylenetetrahydrofolate (mTHF) as the methyl donor and reductant in the reaction, yielding dihydrofolate (DHF) as a by-product. This enzymatic reaction provides an intracellular de novo source of dTMP, an essential precursor for DNA biosynthesis. This chain is Thymidylate synthase, found in Limosilactobacillus reuteri (strain DSM 20016) (Lactobacillus reuteri).